Consider the following 59-residue polypeptide: Small, acid-soluble spore protein H 1 (59 aa).

It belongs to the SspH family.

It is found in the spore core. In Bacillus cereus (strain ATCC 14579 / DSM 31 / CCUG 7414 / JCM 2152 / NBRC 15305 / NCIMB 9373 / NCTC 2599 / NRRL B-3711), this protein is Small, acid-soluble spore protein H 1 (sspH1).